The following is a 180-amino-acid chain: MADKITLWTDLVSELRKKLTKKEMATLQEIIDENGSIEDVIVTLVRKAVNPDLLSISDIELCMQKAIKIGAYVTATGGGSPRSNDNMPSQIAREVVEEAYGGSPEQQQQQNPLQNMMKQMADAISTAIMSEVSSKLKSVMPVPMPQQNSDNGSTPHIVDSSKSKDKSSNDGDNGVFTGDE.

The segment at 138-180 (SVMPVPMPQQNSDNGSTPHIVDSSKSKDKSSNDGDNGVFTGDE) is disordered. Polar residues predominate over residues 145–154 (PQQNSDNGST). Basic and acidic residues predominate over residues 159–169 (DSSKSKDKSSN).

This is an uncharacterized protein from Acidianus filamentous virus 2 (isolate Italy/Pozzuoli) (AFV-2).